The chain runs to 138 residues: Large ribosomal subunit protein uL16 (138 aa).

It belongs to the universal ribosomal protein uL16 family. As to quaternary structure, part of the 50S ribosomal subunit.

Its function is as follows. Binds 23S rRNA and is also seen to make contacts with the A and possibly P site tRNAs. This is Large ribosomal subunit protein uL16 from Neisseria gonorrhoeae (strain ATCC 700825 / FA 1090).